Here is a 451-residue protein sequence, read N- to C-terminus: Chromosomal replication initiator protein DnaA (451 aa).

The interval 1–94 (MKPDLSSLWQ…KPEPKPAQPS (94 aa)) is domain I, interacts with DnaA modulators. The interval 87-106 (EPKPAQPSALPTHHNKEENK) is disordered. Residues 95-113 (ALPTHHNKEENKPQTVIRS) are domain II. The tract at residues 114–331 (YLNPKHVFEN…GALNRVSANA (218 aa)) is domain III, AAA+ region. The ATP site is built by glycine 159, glycine 161, lysine 162, and threonine 163. A domain IV, binds dsDNA region spans residues 332–451 (EFMGAAITID…WSNLIRTLSV (120 aa)).

This sequence belongs to the DnaA family. In terms of assembly, oligomerizes as a right-handed, spiral filament on DNA at oriC.

The protein resides in the cytoplasm. Plays an essential role in the initiation and regulation of chromosomal replication. ATP-DnaA binds to the origin of replication (oriC) to initiate formation of the DNA replication initiation complex once per cell cycle. Binds the DnaA box (a 9 base pair repeat at the origin) and separates the double-stranded (ds)DNA. Forms a right-handed helical filament on oriC DNA; dsDNA binds to the exterior of the filament while single-stranded (ss)DNA is stabiized in the filament's interior. The ATP-DnaA-oriC complex binds and stabilizes one strand of the AT-rich DNA unwinding element (DUE), permitting loading of DNA polymerase. After initiation quickly degrades to an ADP-DnaA complex that is not apt for DNA replication. Binds acidic phospholipids. This chain is Chromosomal replication initiator protein DnaA, found in Pasteurella multocida (strain Pm70).